Reading from the N-terminus, the 1044-residue chain is Elongation factor 3B (1044 aa).

At S2 the chain carries N-acetylserine. The stretch at 5–42 (QQSITVLEELFRKLETATSETREGISSELSSFLNGNII) is one HEAT 1 repeat. I42, H44, and S83 together coordinate ADP. HEAT repeat units follow at residues 86-123 (PYIV…AVNP), 124-162 (VAVK…AAKE), 166-203 (LRMP…TVDN), 205-241 (DIER…EVTP), 242-279 (ATLS…LVED), and 285-323 (PFLG…VGNV). 2 positions are modified to N6,N6,N6-trimethyllysine: K187 and K196. Positions 392, 396, and 397 each coordinate ADP. 2 ABC transporter domains span residues 426–641 (DEGE…YYEL) and 667–993 (VKVS…KKEE). ADP is bound at residue N703. Position 789 is an N6,N6,N6-trimethyllysine (K789). E922, N925, and H951 together coordinate ADP. T972 bears the Phosphothreonine mark. Position 974 is a phosphoserine (S974). A disordered region spans residues 975–1044 (GHNWVAGQGA…DEYVSSDEDF (70 aa)). Residues 987–999 (RIEKKEEEGDKFD) show a composition bias toward basic and acidic residues. Residues 1020–1031 (RKKKKERMKKKK) show a composition bias toward basic residues. A phosphoserine mark is found at S1039 and S1040.

The protein belongs to the ABC transporter superfamily. ABCF family. EF3 subfamily. In terms of assembly, monomer.

It localises to the cytoplasm. The catalysed reaction is ATP + H2O = ADP + phosphate + H(+). It participates in protein biosynthesis; polypeptide chain elongation. Ribosome-dependent ATPase that promotes the translation of proteins required for detoxification of reactive oxygen species. Required for the ATP-dependent release of deacylated tRNA from the ribosomal E-site during protein biosynthesis. Stimulates the eEF1A-dependent binding of aminoacyl-tRNA to the ribosomal A-site, which has reduced affinity for tRNA as long as the E-site is occupied. Assists translation termination by stimulating the release of nascent protein from the ribosome by release factors. The sequence is that of Elongation factor 3B from Saccharomyces cerevisiae (strain ATCC 204508 / S288c) (Baker's yeast).